Reading from the N-terminus, the 205-residue chain is uncharacterized protein (205 aa).

The tract at residues Met1–Lys42 is disordered. Over residues Thr14–Pro24 the composition is skewed to basic residues. Residues Ser30 to Ile40 show a composition bias toward basic and acidic residues. In terms of domain architecture, RRM spans Pro47–Asp122. The tract at residues Pro170–Ser191 is disordered.

This is an uncharacterized protein from Arabidopsis thaliana (Mouse-ear cress).